We begin with the raw amino-acid sequence, 656 residues long: Phosphoprotein 85 (656 aa).

Disordered regions lie at residues 1–174 (MSSR…EGDE) and 615–656 (NGNH…EYCC). The span at 46–55 (SATEDLDRME) shows a compositional bias: basic and acidic residues. Low complexity-rich tracts occupy residues 59 to 70 (SPYSVSSDAPSS) and 140 to 160 (DNSSSGGSSSRTTSNSSRSTS). A compositionally biased stretch (pro residues) spans 625–634 (SPPPPLPPRD). A compositionally biased stretch (basic and acidic residues) spans 635-656 (YPQRDERDRHRRDRRDSGEYCC).

Belongs to the herpesviridae pp85 family. In terms of processing, phosphorylated.

The protein localises to the virion tegument. It localises to the host cytoplasm. The chain is Phosphoprotein 85 (UL25) from Homo sapiens (Human).